The following is a 352-amino-acid chain: Heat-inducible transcription repressor HrcA (352 aa).

It belongs to the HrcA family.

Negative regulator of class I heat shock genes (grpE-dnaK-dnaJ and groELS operons). Prevents heat-shock induction of these operons. The protein is Heat-inducible transcription repressor HrcA of Prochlorococcus marinus (strain MIT 9313).